Here is a 246-residue protein sequence, read N- to C-terminus: Lipoprotein-releasing system ATP-binding protein LolD 1 (246 aa).

The ABC transporter domain occupies 6–244 (LKLERIRKDL…ASVTNEAASL (239 aa)). 43–50 (GPSGSGKS) contacts ATP.

This sequence belongs to the ABC transporter superfamily. Lipoprotein translocase (TC 3.A.1.125) family. The complex is composed of two ATP-binding proteins (LolD) and two transmembrane proteins (LolC and LolE).

It localises to the cell inner membrane. Part of the ABC transporter complex LolCDE involved in the translocation of mature outer membrane-directed lipoproteins, from the inner membrane to the periplasmic chaperone, LolA. Responsible for the formation of the LolA-lipoprotein complex in an ATP-dependent manner. The protein is Lipoprotein-releasing system ATP-binding protein LolD 1 of Chlorobium chlorochromatii (strain CaD3).